Reading from the N-terminus, the 391-residue chain is Oxytocin receptor (391 aa).

Residues 1–38 lie on the Extracellular side of the membrane; the sequence is MEGAFAANWSAEAVNGSAAPPGTEGNRTAGPPQRNEAL. 3 N-linked (GlcNAc...) asparagine glycosylation sites follow: asparagine 8, asparagine 15, and asparagine 26. A helical membrane pass occupies residues 39 to 63; the sequence is ARVEVAVLCLILFLALSGNACVLLA. Topologically, residues 64-74 are cytoplasmic; the sequence is LRTTRHKHSRL. Residues 75–97 form a helical membrane-spanning segment; that stretch reads FFFMKHLSIADLVVAVFQVLPQL. Residues 98–113 lie on the Extracellular side of the membrane; sequence LWDITFRFYGPDLLCR. Residues cysteine 112 and cysteine 187 are joined by a disulfide bond. Residues 114 to 135 form a helical membrane-spanning segment; sequence LVKYLQVVGMFASTYLLLLMSL. Over 136-154 the chain is Cytoplasmic; sequence DRCLAICQPLRSLSRRTDR. Residues 155-175 form a helical membrane-spanning segment; that stretch reads LAVLVTWLGCLVASAPQVHIF. Residues 176-202 lie on the Extracellular side of the membrane; that stretch reads SLREVADGVFDCWAVFIQPWGPKAYIT. The chain crosses the membrane as a helical span at residues 203–225; it reads WITLAVYIVPVIVLATCYGLISF. Topologically, residues 226-277 are cytoplasmic; it reads KIWQNLRLKTAAAAAEAAAGAEGEAADWAGRAILARVSNVKLISKAKIRTVK. The chain crosses the membrane as a helical span at residues 278–296; it reads MTFIVVLAFIVCWTPFFFV. Over 297–311 the chain is Extracellular; it reads QMWSVWDADAPKEAS. Residues 312-334 form a helical membrane-spanning segment; that stretch reads PFIIAMLLASLNSCCNPWIYMLF. Topologically, residues 335–391 are cytoplasmic; that stretch reads TGHLFQELVQRFLCCSFRRLKGSRPGETSVSKKSNSSTFVLSQYSSSQRRCSQPSTL. Residues serine 368 and serine 370 each carry the phosphoserine modification.

It belongs to the G-protein coupled receptor 1 family. Vasopressin/oxytocin receptor subfamily.

Its subcellular location is the cell membrane. In terms of biological role, receptor for oxytocin. The activity of this receptor is mediated by G proteins which activate a phosphatidylinositol-calcium second messenger system. This is Oxytocin receptor (OXTR) from Bos taurus (Bovine).